A 268-amino-acid chain; its full sequence is Leucyl/phenylalanyl-tRNA--protein transferase (268 aa).

Belongs to the L/F-transferase family.

The protein localises to the cytoplasm. It catalyses the reaction N-terminal L-lysyl-[protein] + L-leucyl-tRNA(Leu) = N-terminal L-leucyl-L-lysyl-[protein] + tRNA(Leu) + H(+). The enzyme catalyses N-terminal L-arginyl-[protein] + L-leucyl-tRNA(Leu) = N-terminal L-leucyl-L-arginyl-[protein] + tRNA(Leu) + H(+). The catalysed reaction is L-phenylalanyl-tRNA(Phe) + an N-terminal L-alpha-aminoacyl-[protein] = an N-terminal L-phenylalanyl-L-alpha-aminoacyl-[protein] + tRNA(Phe). Functions in the N-end rule pathway of protein degradation where it conjugates Leu, Phe and, less efficiently, Met from aminoacyl-tRNAs to the N-termini of proteins containing an N-terminal arginine or lysine. This chain is Leucyl/phenylalanyl-tRNA--protein transferase, found in Psychrobacter arcticus (strain DSM 17307 / VKM B-2377 / 273-4).